The following is a 282-amino-acid chain: Bifunctional protein FolD (282 aa).

NADP(+)-binding positions include 162-164 (GRS), S187, and V228.

Belongs to the tetrahydrofolate dehydrogenase/cyclohydrolase family. As to quaternary structure, homodimer.

It carries out the reaction (6R)-5,10-methylene-5,6,7,8-tetrahydrofolate + NADP(+) = (6R)-5,10-methenyltetrahydrofolate + NADPH. It catalyses the reaction (6R)-5,10-methenyltetrahydrofolate + H2O = (6R)-10-formyltetrahydrofolate + H(+). The protein operates within one-carbon metabolism; tetrahydrofolate interconversion. Catalyzes the oxidation of 5,10-methylenetetrahydrofolate to 5,10-methenyltetrahydrofolate and then the hydrolysis of 5,10-methenyltetrahydrofolate to 10-formyltetrahydrofolate. This chain is Bifunctional protein FolD, found in Thermus thermophilus (strain ATCC 27634 / DSM 579 / HB8).